Reading from the N-terminus, the 277-residue chain is Glycerol-3-phosphate acyltransferase (277 aa).

A run of 5 helical transmembrane segments spans residues 3–23, 55–75, 79–99, 111–131, and 155–175; these read LFIFLILVGYLMGSINSAIIV, IMVMVFDALKGILPVILAKFL, PVTVAFTALAAVVGHMYPVFF, IGALLAFHFIIGVMVAATWLL, and LILVGNLNIFPPLFMITILVL. The interval 207–277 is disordered; it reads SPATSAEQEF…PKTKTVKEKE (71 aa). The span at 216–239 shows a compositional bias: basic and acidic residues; sequence FPGKEVIDTNIDETEKTEQAEAVK. Composition is skewed to basic residues over residues 240-253 and 262-271; these read KPKVKKATTKAKKT and KPKSTKPKTK.

This sequence belongs to the PlsY family. As to quaternary structure, probably interacts with PlsX.

The protein resides in the cell inner membrane. The enzyme catalyses an acyl phosphate + sn-glycerol 3-phosphate = a 1-acyl-sn-glycero-3-phosphate + phosphate. It functions in the pathway lipid metabolism; phospholipid metabolism. Catalyzes the transfer of an acyl group from acyl-phosphate (acyl-PO(4)) to glycerol-3-phosphate (G3P) to form lysophosphatidic acid (LPA). This enzyme utilizes acyl-phosphate as fatty acyl donor, but not acyl-CoA or acyl-ACP. The chain is Glycerol-3-phosphate acyltransferase from Legionella pneumophila subsp. pneumophila (strain Philadelphia 1 / ATCC 33152 / DSM 7513).